The chain runs to 265 residues: Tryptophan synthase alpha chain (265 aa).

Residues glutamate 49 and aspartate 60 each act as proton acceptor in the active site.

This sequence belongs to the TrpA family. In terms of assembly, tetramer of two alpha and two beta chains.

The enzyme catalyses (1S,2R)-1-C-(indol-3-yl)glycerol 3-phosphate + L-serine = D-glyceraldehyde 3-phosphate + L-tryptophan + H2O. It functions in the pathway amino-acid biosynthesis; L-tryptophan biosynthesis; L-tryptophan from chorismate: step 5/5. In terms of biological role, the alpha subunit is responsible for the aldol cleavage of indoleglycerol phosphate to indole and glyceraldehyde 3-phosphate. In Ralstonia nicotianae (strain ATCC BAA-1114 / GMI1000) (Ralstonia solanacearum), this protein is Tryptophan synthase alpha chain.